The primary structure comprises 217 residues: MAISPVLFIGLIYLAGGGSLFPGVEAIWLTVPESGERCVYEEIQANVVVVLDYICIDDAFTQLGPTLDVRVTSPYGKELYKIANVTHGQAAFTTSESGTFLACLAMHHDQSHHSVNSSVIVSLDWKMGIRAKDWDSVAKKEKIEGVELEIRRSTEYASAIRANILYLRIREAYMREINEKTNTRVNQLGLMSLGVAIVVSISQVLYLKRYFLKKKLI.

The first 26 residues, 1-26, serve as a signal peptide directing secretion; sequence MAISPVLFIGLIYLAGGGSLFPGVEA. The Lumenal portion of the chain corresponds to 27–186; the sequence is IWLTVPESGE…INEKTNTRVN (160 aa). One can recognise a GOLD domain in the interval 36–152; it reads ERCVYEEIQA…IEGVELEIRR (117 aa). N-linked (GlcNAc...) asparagine glycosylation is found at Asn-84 and Asn-116. Residues 138 to 160 adopt a coiled-coil conformation; the sequence is AKKEKIEGVELEIRRSTEYASAI. Omega-N-methylated arginine is present on residues Arg-170 and Arg-175. A helical transmembrane segment spans residues 187-207; sequence QLGLMSLGVAIVVSISQVLYL. The Cytoplasmic portion of the chain corresponds to 208–217; that stretch reads KRYFLKKKLI. The short motif at 210 to 211 is the COPII vesicle coat-binding element; sequence YF. A COPI vesicle coat-binding motif is present at residues 210–217; sequence YFLKKKLI.

Belongs to the EMP24/GP25L family. In terms of assembly, probably oligomerizes with other members of the EMP24/GP25L family. Associates with the COPI vesicle coat (coatomer). Associates with the COPII vesicle coat (coatomer).

The protein resides in the endoplasmic reticulum membrane. Its function is as follows. Involved in vesicular protein trafficking. Mainly functions in the early secretory pathway. Thought to act as cargo receptor at the lumenal side for incorporation of secretory cargo molecules into transport vesicles and to be involved in vesicle coat formation at the cytoplasmic side. The protein is Transmembrane emp24 domain-containing protein p24delta6 of Arabidopsis thaliana (Mouse-ear cress).